The primary structure comprises 82 residues: Putative defensin-like protein 70 (82 aa).

A signal peptide spans 1-27 (MKMESSKMLVVFTLMVLIAVSSDLVSG). 4 disulfides stabilise this stretch: cysteine 39/cysteine 80, cysteine 43/cysteine 66, cysteine 52/cysteine 78, and cysteine 56/cysteine 79.

Belongs to the DEFL family.

It is found in the secreted. The protein is Putative defensin-like protein 70 (LCR83) of Arabidopsis thaliana (Mouse-ear cress).